Consider the following 933-residue polypeptide: 2-oxoglutarate dehydrogenase E1 component (933 aa).

The protein belongs to the alpha-ketoglutarate dehydrogenase family. In terms of assembly, homodimer. Part of the 2-oxoglutarate dehydrogenase (OGDH) complex composed of E1 (2-oxoglutarate dehydrogenase), E2 (dihydrolipoamide succinyltransferase) and E3 (dihydrolipoamide dehydrogenase); the complex contains multiple copies of the three enzymatic components (E1, E2 and E3). The cofactor is thiamine diphosphate.

The catalysed reaction is N(6)-[(R)-lipoyl]-L-lysyl-[protein] + 2-oxoglutarate + H(+) = N(6)-[(R)-S(8)-succinyldihydrolipoyl]-L-lysyl-[protein] + CO2. Functionally, E1 component of the 2-oxoglutarate dehydrogenase (OGDH) complex which catalyzes the decarboxylation of 2-oxoglutarate, the first step in the conversion of 2-oxoglutarate to succinyl-CoA and CO(2). This is 2-oxoglutarate dehydrogenase E1 component from Staphylococcus saprophyticus subsp. saprophyticus (strain ATCC 15305 / DSM 20229 / NCIMB 8711 / NCTC 7292 / S-41).